Reading from the N-terminus, the 176-residue chain is Dual specificity phosphatase 28 (176 aa).

One can recognise a Tyrosine-protein phosphatase domain in the interval 17-159 (PPLVRVAPSL…LQKYEEALQA (143 aa)). Cys103 serves as the catalytic Phosphocysteine intermediate.

The protein belongs to the protein-tyrosine phosphatase family. Non-receptor class dual specificity subfamily. As to quaternary structure, monomer.

It carries out the reaction O-phospho-L-tyrosyl-[protein] + H2O = L-tyrosyl-[protein] + phosphate. The enzyme catalyses O-phospho-L-seryl-[protein] + H2O = L-seryl-[protein] + phosphate. It catalyses the reaction O-phospho-L-threonyl-[protein] + H2O = L-threonyl-[protein] + phosphate. Functionally, has phosphatase activity with the synthetic substrate 6,8-difluoro-4-methylumbelliferyl phosphate (in vitro). Has almost no detectable activity with phosphotyrosine, even less activity with phosphothreonine and displays complete lack of activity with phosphoserine. The poor activity with phosphotyrosine may be due to steric hindrance by bulky amino acid sidechains that obstruct access to the active site. This chain is Dual specificity phosphatase 28 (DUSP28), found in Homo sapiens (Human).